The following is a 425-amino-acid chain: Serine hydroxymethyltransferase (425 aa).

Residues Leu125 and 129–131 (GHL) contribute to the (6S)-5,6,7,8-tetrahydrofolate site. Lys234 carries the post-translational modification N6-(pyridoxal phosphate)lysine.

It belongs to the SHMT family. In terms of assembly, homodimer. The cofactor is pyridoxal 5'-phosphate.

The protein localises to the cytoplasm. The catalysed reaction is (6R)-5,10-methylene-5,6,7,8-tetrahydrofolate + glycine + H2O = (6S)-5,6,7,8-tetrahydrofolate + L-serine. Its pathway is one-carbon metabolism; tetrahydrofolate interconversion. It participates in amino-acid biosynthesis; glycine biosynthesis; glycine from L-serine: step 1/1. Functionally, catalyzes the reversible interconversion of serine and glycine with tetrahydrofolate (THF) serving as the one-carbon carrier. This reaction serves as the major source of one-carbon groups required for the biosynthesis of purines, thymidylate, methionine, and other important biomolecules. Also exhibits THF-independent aldolase activity toward beta-hydroxyamino acids, producing glycine and aldehydes, via a retro-aldol mechanism. This is Serine hydroxymethyltransferase from Marinomonas sp. (strain MWYL1).